Here is a 749-residue protein sequence, read N- to C-terminus: Disintegrin and metalloproteinase domain-containing protein 10 (749 aa).

The first 19 residues, 1 to 19 (MVLPTVLILLLSWAAGLGG), serve as a signal peptide directing secretion. A propeptide spanning residues 20-214 (QYGNPLNKYI…SGPELLRKKR (195 aa)) is cleaved from the precursor. Topologically, residues 20–673 (QYGNPLNKYI…SPQLYENIAE (654 aa)) are extracellular. Residues 171 to 178 (GGCADHSV) carry the Cysteine switch motif. A Zn(2+)-binding site is contributed by Cys173. The Peptidase M12B domain maps to 221–457 (NTCQLYIQTD…KRNNCFVESG (237 aa)). Intrachain disulfides connect Cys223–Cys314, Cys345–Cys452, Cys400–Cys436, Cys461–Cys496, Cys472–Cys485, Cys474–Cys480, Cys484–Cys516, Cys504–Cys512, Cys511–Cys537, Cys525–Cys544, Cys531–Cys563, Cys556–Cys568, Cys573–Cys599, Cys581–Cys608, Cys583–Cys598, Cys595–Cys640, and Cys633–Cys646. N-linked (GlcNAc...) asparagine glycans are attached at residues Asn268 and Asn279. His384 is a Zn(2+) binding site. The active site involves Glu385. The Zn(2+) site is built by His388 and His394. The N-linked (GlcNAc...) asparagine glycan is linked to Asn440. The Disintegrin domain maps to 458 to 552 (QPICGNGMVE…LCPASDPKPN (95 aa)). N-linked (GlcNAc...) asparagine glycosylation is present at Asn552. A helical transmembrane segment spans residues 674-694 (WIVAHWWAVLLMGIALIMLMA). At 695–749 (GFIKICSVHTPSSNPKLPPPKPLPGTLKRRRPPQPIQQPPRQRPRESYQMGHMRR) the chain is on the cytoplasmic side. The tract at residues 705 to 749 (PSSNPKLPPPKPLPGTLKRRRPPQPIQQPPRQRPRESYQMGHMRR) is disordered. An SH3-binding motif is present at residues 709-716 (PKLPPPKP). Thr720 carries the phosphothreonine modification. Positions 723–729 (RRRPPQP) match the SH3-binding motif. The interaction with AP2A1, AP2A2 and AP2M1 stretch occupies residues 735–749 (RQRPRESYQMGHMRR).

In terms of assembly, forms a ternary EFNA5-EPHA3-ADAM10 complex mediating EFNA5 extracellular domain shedding by ADAM10 which regulates the EFNA5-EPHA3 complex internalization and function, the cleavage occurs in trans, with ADAM10 and its substrate being on the membranes of opposing cells. Interacts with the clathrin adapter AP2 complex subunits AP2A1, AP2A2, AP2B1, and AP2M1; this interaction facilitates ADAM10 endocytosis from the plasma membrane during long-term potentiation in hippocampal neurons. Forms a ternary complex composed of ADAM10, EPHA4 and CADH1; within the complex, ADAM10 cleaves CADH1 which disrupts adherens junctions. Interacts with EPHA2. Interacts with NGF in a divalent cation-dependent manner. Interacts with TSPAN14; the interaction promotes ADAM10 maturation and cell surface expression. Interacts with TSPAN5, TSPAN10, TSPAN14, TSPAN15, TSPAN17 and TSPAN33; these interactions regulate ADAM10 substrate specificity, endocytosis and turnover. Interacts (via extracellular domain) with TSPAN33 (via extracellular domain) and (via cytoplasmic domain) with AFDN; interaction with TSPAN33 allows the docking of ADAM10 to zonula adherens through a PDZ11-dependent interaction between TSPAN33 and PLEKHA7 while interaction with AFDN locks ADAM10 at zonula adherens. Interacts with DLG1; this interaction recruits ADAM10 to the cell membrane during long-term depression in hippocampal neurons. Interacts (via extracellular domain) with BACE1 (via extracellular domain). Interacts with FAM171A1. Zn(2+) serves as cofactor. In terms of processing, the precursor is cleaved by furin and PCSK7. Expressed in the brain, specifically in neurons and astrocytes (at protein level). Expressed in inner and outer pillar cells of the organ of Corti (at protein level). Expressed in kidney and lung.

The protein resides in the cell membrane. Its subcellular location is the golgi apparatus membrane. The protein localises to the cytoplasmic vesicle. It localises to the clathrin-coated vesicle. It is found in the cell projection. The protein resides in the axon. Its subcellular location is the dendrite. The protein localises to the cell junction. It localises to the adherens junction. It is found in the cytoplasm. The catalysed reaction is Endopeptidase of broad specificity.. With respect to regulation, catalytically inactive when the propeptide is intact and associated with the mature enzyme. The disintegrin and cysteine-rich regions modulate access of substrates to exerts an inhibitory effect on the cleavage of ADAM10 substrates. Its function is as follows. Transmembrane metalloprotease which mediates the ectodomain shedding of a myriad of transmembrane proteins, including adhesion proteins, growth factor precursors and cytokines being essential for development and tissue homeostasis. Associates with six members of the tetraspanin superfamily TspanC8 which regulate its exit from the endoplasmic reticulum and its substrate selectivity. Cleaves the membrane-bound precursor of TNF-alpha to its mature soluble form. Responsible for the proteolytical release of soluble JAM3 from endothelial cells surface. Responsible for the proteolytic release of several other cell-surface proteins, including heparin-binding epidermal growth-like factor, ephrin-A2, CD44, CDH2 and for constitutive and regulated alpha-secretase cleavage of amyloid precursor protein (APP) at '687-Lys-|-Leu-688'. Contributes to the normal cleavage of the cellular prion protein. Involved in the cleavage of the adhesion molecule L1 at the cell surface and in released membrane vesicles, suggesting a vesicle-based protease activity. Also controls the proteolytic processing of Notch and mediates lateral inhibition during neurogenesis. Required for the development of type 1 transitional B cells into marginal zone B cells, probably by cleaving Notch. Responsible for the FasL ectodomain shedding and for the generation of the remnant ADAM10-processed FasL (FasL APL) transmembrane form. Also cleaves the ectodomain of the integral membrane proteins CORIN and ITM2B. Mediates the proteolytic cleavage of LAG3, leading to release the secreted form of LAG3. Mediates the proteolytic cleavage of IL6R and IL11RA, leading to the release of secreted forms of IL6R and IL11RA. Enhances the cleavage of CHL1 by BACE1. Cleaves NRCAM. Cleaves TREM2, resulting in shedding of the TREM2 ectodomain. Involved in the development and maturation of glomerular and coronary vasculature. During development of the cochlear organ of Corti, promotes pillar cell separation by forming a ternary complex with CADH1 and EPHA4 and cleaving CADH1 at adherens junctions. May regulate the EFNA5-EPHA3 signaling. This Mus musculus (Mouse) protein is Disintegrin and metalloproteinase domain-containing protein 10 (Adam10).